Here is a 159-residue protein sequence, read N- to C-terminus: Ribosomal RNA large subunit methyltransferase H (159 aa).

S-adenosyl-L-methionine is bound by residues leucine 76, glycine 108, and 127–132; that span reads FGRLTL.

The protein belongs to the RNA methyltransferase RlmH family. In terms of assembly, homodimer.

The protein resides in the cytoplasm. The catalysed reaction is pseudouridine(1915) in 23S rRNA + S-adenosyl-L-methionine = N(3)-methylpseudouridine(1915) in 23S rRNA + S-adenosyl-L-homocysteine + H(+). Specifically methylates the pseudouridine at position 1915 (m3Psi1915) in 23S rRNA. This Streptococcus pneumoniae (strain 70585) protein is Ribosomal RNA large subunit methyltransferase H.